Here is a 362-residue protein sequence, read N- to C-terminus: Heme A synthase (362 aa).

The next 5 helical transmembrane spans lie at Ala-12–Gly-32, Val-102–Gly-122, Leu-128–Ser-148, Val-159–Leu-179, and Ala-198–Leu-218. His-262 contacts heme. Helical transmembrane passes span Met-264 to Trp-281, Gly-289 to Leu-309, and Val-312 to Val-332. His-320 is a heme binding site.

It belongs to the COX15/CtaA family. Type 2 subfamily. As to quaternary structure, interacts with CtaB. Requires heme b as cofactor.

It is found in the cell membrane. The catalysed reaction is Fe(II)-heme o + 2 A + H2O = Fe(II)-heme a + 2 AH2. The protein operates within porphyrin-containing compound metabolism; heme A biosynthesis; heme A from heme O: step 1/1. Functionally, catalyzes the conversion of heme O to heme A by two successive hydroxylations of the methyl group at C8. The first hydroxylation forms heme I, the second hydroxylation results in an unstable dihydroxymethyl group, which spontaneously dehydrates, resulting in the formyl group of heme A. The protein is Heme A synthase of Rhodopseudomonas palustris (strain BisB18).